A 285-amino-acid chain; its full sequence is 1,4-dihydroxy-2-naphthoyl-CoA synthase (285 aa).

Substrate is bound by residues Arg-45, 84–88 (SGGDQ), Tyr-97, 129–133 (YAIGG), Thr-155, Ser-161, Tyr-258, and Lys-273. 154–156 (QTG) serves as a coordination point for hydrogencarbonate.

It belongs to the enoyl-CoA hydratase/isomerase family. MenB subfamily. The cofactor is hydrogencarbonate.

The enzyme catalyses 2-succinylbenzoyl-CoA + H(+) = 1,4-dihydroxy-2-naphthoyl-CoA + H2O. The protein operates within quinol/quinone metabolism; 1,4-dihydroxy-2-naphthoate biosynthesis; 1,4-dihydroxy-2-naphthoate from chorismate: step 6/7. It participates in quinol/quinone metabolism; menaquinone biosynthesis. Its function is as follows. Converts o-succinylbenzoyl-CoA (OSB-CoA) to 1,4-dihydroxy-2-naphthoyl-CoA (DHNA-CoA). This chain is 1,4-dihydroxy-2-naphthoyl-CoA synthase, found in Haemophilus influenzae (strain ATCC 51907 / DSM 11121 / KW20 / Rd).